Reading from the N-terminus, the 607-residue chain is Dolichyl-diphosphooligosaccharide--protein glycosyltransferase subunit 1 (607 aa).

Residues 1–23 (MEAPVARLFLLLLLGSWTPAPGS) form the signal peptide. The Lumenal portion of the chain corresponds to 24-434 (ASSEAPPLIN…VVHYTFNKVL (411 aa)). At Lys187 the chain carries N6-acetyllysine. N-linked (GlcNAc...) asparagine glycosylation occurs at Asn299. Residues 435–455 (MLQEPLLVVAAFYILFFTVII) form a helical membrane-spanning segment. At 456–607 (YVRLDFSITK…TKIDHILDAL (152 aa)) the chain is on the cytoplasmic side. Lys538 carries the post-translational modification N6-acetyllysine; alternate. Lys538 participates in a covalent cross-link: Glycyl lysine isopeptide (Lys-Gly) (interchain with G-Cter in SUMO2); alternate.

Belongs to the OST1 family. As to quaternary structure, component of the oligosaccharyltransferase (OST) complex. OST exists in two different complex forms which contain common core subunits RPN1, RPN2, OST48, OST4, DAD1 and TMEM258, either STT3A or STT3B as catalytic subunits, and form-specific accessory subunits. STT3A complex assembly occurs through the formation of 3 subcomplexes. Subcomplex 1 contains RPN1 and TMEM258, subcomplex 2 contains the STT3A-specific subunits STT3A, DC2/OSTC, and KCP2 as well as the core subunit OST4, and subcomplex 3 contains RPN2, DAD1, and OST48. The STT3A complex can form stable complexes with the Sec61 complex or with both the Sec61 and TRAP complexes. Interacts with TMEM35A/NACHO. Post-translationally, ubiquitinated by the ECS(ASB11) complex. In terms of processing, ufmylated by UFL1 in response to endoplasmic reticulum stress, promoting reticulophagy of endoplasmic reticulum sheets.

It localises to the endoplasmic reticulum membrane. It functions in the pathway protein modification; protein glycosylation. Functionally, subunit of the oligosaccharyl transferase (OST) complex that catalyzes the initial transfer of a defined glycan (Glc(3)Man(9)GlcNAc(2) in eukaryotes) from the lipid carrier dolichol-pyrophosphate to an asparagine residue within an Asn-X-Ser/Thr consensus motif in nascent polypeptide chains, the first step in protein N-glycosylation. N-glycosylation occurs cotranslationally and the complex associates with the Sec61 complex at the channel-forming translocon complex that mediates protein translocation across the endoplasmic reticulum (ER). All subunits are required for a maximal enzyme activity. The polypeptide is Dolichyl-diphosphooligosaccharide--protein glycosyltransferase subunit 1 (Macaca fascicularis (Crab-eating macaque)).